The chain runs to 248 residues: Peptidyl-tRNA hydrolase (248 aa).

Tyr14 contributes to the tRNA binding site. Catalysis depends on His19, which acts as the Proton acceptor. 3 residues coordinate tRNA: Phe64, Asn66, and Asn112. Residues 190-248 (PRSSTGEASKGRKKAQKSEPGVAKTPAKAATPEAPAAGDIPAAPEDSRSPMQKLLDKFK) are disordered. Low complexity predominate over residues 212-226 (AKTPAKAATPEAPAA).

The protein belongs to the PTH family. Monomer.

Its subcellular location is the cytoplasm. It carries out the reaction an N-acyl-L-alpha-aminoacyl-tRNA + H2O = an N-acyl-L-amino acid + a tRNA + H(+). Its function is as follows. Hydrolyzes ribosome-free peptidyl-tRNAs (with 1 or more amino acids incorporated), which drop off the ribosome during protein synthesis, or as a result of ribosome stalling. Functionally, catalyzes the release of premature peptidyl moieties from peptidyl-tRNA molecules trapped in stalled 50S ribosomal subunits, and thus maintains levels of free tRNAs and 50S ribosomes. This is Peptidyl-tRNA hydrolase from Ruegeria sp. (strain TM1040) (Silicibacter sp.).